A 110-amino-acid chain; its full sequence is Large ribosomal subunit protein uL22 (110 aa).

This sequence belongs to the universal ribosomal protein uL22 family. In terms of assembly, part of the 50S ribosomal subunit.

In terms of biological role, this protein binds specifically to 23S rRNA; its binding is stimulated by other ribosomal proteins, e.g. L4, L17, and L20. It is important during the early stages of 50S assembly. It makes multiple contacts with different domains of the 23S rRNA in the assembled 50S subunit and ribosome. Its function is as follows. The globular domain of the protein is located near the polypeptide exit tunnel on the outside of the subunit, while an extended beta-hairpin is found that lines the wall of the exit tunnel in the center of the 70S ribosome. In Vesicomyosocius okutanii subsp. Calyptogena okutanii (strain HA), this protein is Large ribosomal subunit protein uL22.